The chain runs to 472 residues: Coenzyme F(430) synthetase (472 aa).

119–125 (GVKAKTS) contacts ATP.

Belongs to the MurCDEF family.

The catalysed reaction is 15,17(3)-seco-F430-17(3)-acid + ATP = coenzyme F430 + ADP + phosphate. Its function is as follows. Involved in the biosynthesis of the unique nickel-containing tetrapyrrole coenzyme F430, the prosthetic group of methyl-coenzyme M reductase (MCR), which plays a key role in methanogenesis and anaerobic methane oxidation. Catalyzes the activation the g-propionate side chain of 15,17(3)-seco-F430-17(3)-acid (seco-F430) for intramolecular C-C bond formation to yield the carbocyclic F ring of coenzyme F430. This is Coenzyme F(430) synthetase from Methanosarcina acetivorans (strain ATCC 35395 / DSM 2834 / JCM 12185 / C2A).